The chain runs to 311 residues: Malate dehydrogenase (311 aa).

Residues 7 to 13 and Asp-34 each bind NAD(+); that span reads GAAGGIG. Residues Arg-81 and Arg-87 each contribute to the substrate site. NAD(+) is bound by residues Asn-94 and 117–119; that span reads ITN. Asn-119 and Arg-153 together coordinate substrate. His-177 (proton acceptor) is an active-site residue. Met-227 serves as a coordination point for NAD(+).

This sequence belongs to the LDH/MDH superfamily. MDH type 1 family. In terms of assembly, homodimer.

It catalyses the reaction (S)-malate + NAD(+) = oxaloacetate + NADH + H(+). Its function is as follows. Catalyzes the reversible oxidation of malate to oxaloacetate. This Vibrio campbellii (strain ATCC BAA-1116) protein is Malate dehydrogenase.